A 540-amino-acid polypeptide reads, in one-letter code: CWF19-like protein 1 (540 aa).

A disordered region spans residues 265-326; it reads ENPYRKSDKD…AKQPRKHPQP (62 aa). Residues 267 to 277 are compositionally biased toward basic and acidic residues; that stretch reads PYRKSDKDTPK.

The protein belongs to the CWF19 family.

In Xenopus laevis (African clawed frog), this protein is CWF19-like protein 1 (cwf19l1).